Consider the following 433-residue polypeptide: MFNFAVSRESLLSGFQWFFFIFCNTVVVPPTLLSAFQLPQSSLLTLTQYAFLATALACFAQAFCGHRRAIMEGPGGLWWGTILTITLGEASRGTPINDIATSLAVGIALSGVLTMLIGFSGLGHRLARLFTPSVMVLFMLMLGAQLTTIFFKGMLGLPFGIADPNFKIQLPPFALSVAVMCLVLAMIIFLPQRFARYGLLVGTITGWLLWYFCFPSSHSLSGELHWQWFPLGSGGALSPGIILTAVITGLVNISNTYGAIRGTDVFYPQQGAGNTRYRRSFVATGFMTLITVPLAVIPFSPFVSSIGLLTQTGDYTRRSFIYGSVICLLVALVPALTRLFCSIPLPVSSAVMLVSYLPLLFSALVFSQQITFTARNIYRLALPLFVGIFLMALPPVYLQDLPLTLRPLLSNGLLVGILLAVLMDNLIPWERIE.

Residues 1–17 lie on the Periplasmic side of the membrane; that stretch reads MFNFAVSRESLLSGFQW. A helical membrane pass occupies residues 18-38; sequence FFFIFCNTVVVPPTLLSAFQL. The Cytoplasmic segment spans residues 39-42; sequence PQSS. The chain crosses the membrane as a helical span at residues 43-63; the sequence is LLTLTQYAFLATALACFAQAF. Residues 64–68 are Periplasmic-facing; that stretch reads CGHRR. Residues 69 to 89 traverse the membrane as a helical segment; that stretch reads AIMEGPGGLWWGTILTITLGE. The Cytoplasmic segment spans residues 90–102; the sequence is ASRGTPINDIATS. A helical transmembrane segment spans residues 103-123; the sequence is LAVGIALSGVLTMLIGFSGLG. The Periplasmic segment spans residues 124–130; that stretch reads HRLARLF. The helical transmembrane segment at 131-151 threads the bilayer; it reads TPSVMVLFMLMLGAQLTTIFF. Over 152-169 the chain is Cytoplasmic; it reads KGMLGLPFGIADPNFKIQ. A helical membrane pass occupies residues 170-190; sequence LPPFALSVAVMCLVLAMIIFL. Residues 191–196 are Periplasmic-facing; the sequence is PQRFAR. Residues 197 to 217 form a helical membrane-spanning segment; it reads YGLLVGTITGWLLWYFCFPSS. Residues 218–230 are Cytoplasmic-facing; it reads HSLSGELHWQWFP. The chain crosses the membrane as a helical span at residues 231-251; the sequence is LGSGGALSPGIILTAVITGLV. At 252–288 the chain is on the periplasmic side; it reads NISNTYGAIRGTDVFYPQQGAGNTRYRRSFVATGFMT. A helical transmembrane segment spans residues 289–309; that stretch reads LITVPLAVIPFSPFVSSIGLL. At 310–319 the chain is on the cytoplasmic side; the sequence is TQTGDYTRRS. A helical membrane pass occupies residues 320-340; the sequence is FIYGSVICLLVALVPALTRLF. Over 341 to 345 the chain is Periplasmic; it reads CSIPL. A helical transmembrane segment spans residues 346-366; the sequence is PVSSAVMLVSYLPLLFSALVF. The Cytoplasmic portion of the chain corresponds to 367–379; that stretch reads SQQITFTARNIYR. A helical transmembrane segment spans residues 380–400; that stretch reads LALPLFVGIFLMALPPVYLQD. Residues 401–407 are Periplasmic-facing; the sequence is LPLTLRP. The chain crosses the membrane as a helical span at residues 408–428; the sequence is LLSNGLLVGILLAVLMDNLIP. Residues 429–433 lie on the Cytoplasmic side of the membrane; that stretch reads WERIE.

It belongs to the nucleobase:cation symporter-2 (NCS2) (TC 2.A.40) family.

It is found in the cell inner membrane. The sequence is that of Putative purine permease YbbY (ybbY) from Escherichia coli (strain K12).